We begin with the raw amino-acid sequence, 205 residues long: Guanylate kinase (205 aa).

Residues 5-184 (GLLIVLSGPS…AVQKIKGIVE (180 aa)) form the Guanylate kinase-like domain. 12–19 (GPSGVGKG) contributes to the ATP binding site.

This sequence belongs to the guanylate kinase family.

The protein localises to the cytoplasm. The enzyme catalyses GMP + ATP = GDP + ADP. Its function is as follows. Essential for recycling GMP and indirectly, cGMP. The polypeptide is Guanylate kinase (Listeria innocua serovar 6a (strain ATCC BAA-680 / CLIP 11262)).